The sequence spans 338 residues: Glycerol-3-phosphate dehydrogenase [NAD(P)+] (338 aa).

NADPH is bound by residues W11, R30, and K107. The sn-glycerol 3-phosphate site is built by K107, G140, and S142. A144 serves as a coordination point for NADPH. Sn-glycerol 3-phosphate is bound by residues K195, D248, S258, R259, and N260. The active-site Proton acceptor is K195. Residue R259 coordinates NADPH. NADPH is bound by residues V283 and E285.

Belongs to the NAD-dependent glycerol-3-phosphate dehydrogenase family.

It localises to the cytoplasm. It carries out the reaction sn-glycerol 3-phosphate + NAD(+) = dihydroxyacetone phosphate + NADH + H(+). It catalyses the reaction sn-glycerol 3-phosphate + NADP(+) = dihydroxyacetone phosphate + NADPH + H(+). It participates in membrane lipid metabolism; glycerophospholipid metabolism. Its function is as follows. Catalyzes the reduction of the glycolytic intermediate dihydroxyacetone phosphate (DHAP) to sn-glycerol 3-phosphate (G3P), the key precursor for phospholipid synthesis. This Ralstonia nicotianae (strain ATCC BAA-1114 / GMI1000) (Ralstonia solanacearum) protein is Glycerol-3-phosphate dehydrogenase [NAD(P)+].